Consider the following 310-residue polypeptide: Ribosome production factor 2 homolog (310 aa).

A Brix domain is found at 29-239; it reads KKTLILHGTK…VRRHRYPVES (211 aa). The disordered stretch occupies residues 281–310; that stretch reads LSNDVKGLKRERREAKKNKDHSKKQKINPE. Basic residues predominate over residues 295 to 310; the sequence is AKKNKDHSKKQKINPE.

This sequence belongs to the RPF2 family.

The protein localises to the nucleus. It is found in the nucleolus. The polypeptide is Ribosome production factor 2 homolog (Oryza sativa subsp. japonica (Rice)).